A 109-amino-acid polypeptide reads, in one-letter code: Iron-sulfur cluster assembly protein CyaY (109 aa).

This sequence belongs to the frataxin family.

Its function is as follows. Involved in iron-sulfur (Fe-S) cluster assembly. May act as a regulator of Fe-S biogenesis. The chain is Iron-sulfur cluster assembly protein CyaY from Bordetella pertussis (strain Tohama I / ATCC BAA-589 / NCTC 13251).